Here is a 288-residue protein sequence, read N- to C-terminus: MAKDIEASAPEGGEFSAKDYTDPPPAPLIDVEELTKWSLYRAVIAEFIATLLFLYITVATVIGYKHQSDATVNTTDAACSGVGILGIAWAFGGMIFILVYCTAGISGGHINPAVTFGLFLARKVSLIRAVLYIIAQCLGAICGVGLVKGFQSSYYARYGGGANELSDGYSKGTGLGAEIIGTFVLVYTVFSATDPKRNARDSHIPVLAPLPIGFAVFMVHLATIPITGTGINPARSLGTAVIYNKDKAWDDQWIFWVGPLIGAAIAAAYHQYVLRASAAKLGSYRSNA.

Residues Met-1–Thr-21 form a disordered region. The next 2 helical transmembrane spans lie at Ala-42–Ile-62 and Gly-81–Cys-101. The NPA 1 signature appears at Asn-111–Ala-113. The next 3 membrane-spanning stretches (helical) occupy residues Val-130–Phe-150, Gly-172–Ala-192, and Ile-204–Ile-224. Positions Asn-232–Ala-234 match the NPA 2 motif. A helical membrane pass occupies residues Ile-254 to Leu-274.

It belongs to the MIP/aquaporin (TC 1.A.8) family. PIP (TC 1.A.8.11) subfamily. Expressed in roots, leaves and anthers.

The protein resides in the cell membrane. In terms of biological role, aquaporins facilitate the transport of water and small neutral solutes across cell membranes. This is Probable aquaporin PIP2-2 (PIP2-2) from Oryza sativa subsp. japonica (Rice).